The chain runs to 266 residues: Small ribosomal subunit protein uS3 (266 aa).

The 69-residue stretch at 39–107 (VREYLKKKLK…PVHVNIEEIR (69 aa)) folds into the KH type-2 domain. The interval 214–266 (PVVEEVTEDKRPRRNARPGDRRPRRDGEGGAPGARRGGPRRGAGKPEDGKTGE) is disordered. Composition is skewed to basic and acidic residues over residues 230–241 (RPGDRRPRRDGE) and 257–266 (GKPEDGKTGE).

This sequence belongs to the universal ribosomal protein uS3 family. In terms of assembly, part of the 30S ribosomal subunit. Forms a tight complex with proteins S10 and S14.

Binds the lower part of the 30S subunit head. Binds mRNA in the 70S ribosome, positioning it for translation. This chain is Small ribosomal subunit protein uS3, found in Burkholderia mallei (strain NCTC 10247).